Here is a 313-residue protein sequence, read N- to C-terminus: Ankyrin repeat family A protein 2 (313 aa).

5 ANK repeats span residues alanine 148–glutamate 180, glutamate 181–lysine 213, glycine 214–tryptophan 246, asparagine 247–aspartate 279, and serine 280–glutamate 313.

In terms of assembly, interacts (via ANK repeats) with CCDC8 (via PxLPxI/L motif); mediates the interaction with the 3M complex which is composed of CCDC8, CUL7 and OBSL1. Interacts (via ANK repeats) with HDAC4 (via PxLPxI/L motif). Interacts (via ANK repeats) with HDAC5 (via PxLPxI/L motif). Interacts (via ANK repeats) with LRP2/megalin (via PxLPxI/L motif). Interacts (via ANK repeats) with RFX7 (via PxLPxI/L motif). Interacts with AHRR. Interacts with NEK6.

The protein resides in the cytoplasm. It localises to the cytoskeleton. The protein localises to the membrane. May regulate the interaction between the 3M complex and the histone deacetylases HDAC4 and HDAC5. May also regulate LRP2/megalin. The sequence is that of Ankyrin repeat family A protein 2 (ANKRA2) from Bos taurus (Bovine).